The sequence spans 399 residues: Nicotinate phosphoribosyltransferase (399 aa).

Position 217 is a phosphohistidine; by autocatalysis (His-217).

This sequence belongs to the NAPRTase family. Transiently phosphorylated on a His residue during the reaction cycle. Phosphorylation strongly increases the affinity for substrates and increases the rate of nicotinate D-ribonucleotide production. Dephosphorylation regenerates the low-affinity form of the enzyme, leading to product release.

The catalysed reaction is nicotinate + 5-phospho-alpha-D-ribose 1-diphosphate + ATP + H2O = nicotinate beta-D-ribonucleotide + ADP + phosphate + diphosphate. It participates in cofactor biosynthesis; NAD(+) biosynthesis; nicotinate D-ribonucleotide from nicotinate: step 1/1. Catalyzes the synthesis of beta-nicotinate D-ribonucleotide from nicotinate and 5-phospho-D-ribose 1-phosphate at the expense of ATP. The chain is Nicotinate phosphoribosyltransferase from Burkholderia ambifaria (strain MC40-6).